The primary structure comprises 486 residues: Cardiolipin synthase A (486 aa).

The next 2 membrane-spanning stretches (helical) occupy residues 3–23 (IFYN…IANI) and 38–58 (MSWL…WFFF). 2 PLD phosphodiesterase domains span residues 219 to 246 (VDVR…VDPY) and 399 to 426 (QKGL…DMRS). Residues H224, K226, D231, H404, K406, and D411 contribute to the active site.

It belongs to the phospholipase D family. Cardiolipin synthase subfamily. ClsA sub-subfamily.

The protein localises to the cell inner membrane. The catalysed reaction is 2 a 1,2-diacyl-sn-glycero-3-phospho-(1'-sn-glycerol) = a cardiolipin + glycerol. Catalyzes the reversible phosphatidyl group transfer from one phosphatidylglycerol molecule to another to form cardiolipin (CL) (diphosphatidylglycerol) and glycerol. The protein is Cardiolipin synthase A of Buchnera aphidicola subsp. Acyrthosiphon pisum (strain 5A).